A 1358-amino-acid polypeptide reads, in one-letter code: DNA-directed RNA polymerase subunit beta (1358 aa).

Residues 1033–1051 (QGLEDRKKEHEARFDDKKG) are compositionally biased toward basic and acidic residues. The tract at residues 1033-1053 (QGLEDRKKEHEARFDDKKGKL) is disordered.

This sequence belongs to the RNA polymerase beta chain family. The RNAP catalytic core consists of 2 alpha, 1 beta, 1 beta' and 1 omega subunit. When a sigma factor is associated with the core the holoenzyme is formed, which can initiate transcription.

The enzyme catalyses RNA(n) + a ribonucleoside 5'-triphosphate = RNA(n+1) + diphosphate. Its function is as follows. DNA-dependent RNA polymerase catalyzes the transcription of DNA into RNA using the four ribonucleoside triphosphates as substrates. In Marinobacter nauticus (strain ATCC 700491 / DSM 11845 / VT8) (Marinobacter aquaeolei), this protein is DNA-directed RNA polymerase subunit beta.